The following is a 144-amino-acid chain: Tryparedoxin (144 aa).

The Thioredoxin domain occupies 2–144; it reads SGLAKYLPGA…PDGANFPWPN (143 aa). The cysteines at positions 40 and 43 are disulfide-linked.

Belongs to the thioredoxin family.

Functionally, acts as a thiol-disulfide oxidoreductase. It is spontaneously reduced by trypanothione. This chain is Tryparedoxin, found in Trypanosoma brucei brucei.